A 531-amino-acid polypeptide reads, in one-letter code: Dihydropyrimidinase (531 aa).

Positions 103, 105, and 193 each coordinate Zn(2+). Lys193 is subject to N6-carboxylysine. Substrate is bound at residue Tyr198. His226 and His282 together coordinate Zn(2+). Ser332 contacts substrate. Asp359 is a binding site for Zn(2+). Asn380 lines the substrate pocket.

Belongs to the metallo-dependent hydrolases superfamily. Hydantoinase/dihydropyrimidinase family. In terms of assembly, homotetramer. Zn(2+) serves as cofactor. Carboxylation allows a single lysine to coordinate two zinc ions.

It is found in the endoplasmic reticulum. The enzyme catalyses 5,6-dihydrouracil + H2O = 3-(carbamoylamino)propanoate + H(+). It participates in amino-acid biosynthesis; beta-alanine biosynthesis. Its function is as follows. Catalyzes the second step of the reductive pyrimidine degradation, the reversible hydrolytic ring opening of dihydropyrimidines. Can catalyze the ring opening of 5,6-dihydrouracil to N-carbamoyl-alanine and of 5,6-dihydrothymine to N-carbamoyl-amino isobutyrate. Involved in the recycling of nitrogen from nucleobases to general nitrogen metabolism. The chain is Dihydropyrimidinase from Arabidopsis thaliana (Mouse-ear cress).